Reading from the N-terminus, the 819-residue chain is LPS-assembly protein LptD (819 aa).

A signal peptide spans 1 to 33 (MRQMKYQFKFNPLAAAIFTLLCGGSMQSSYADA).

It belongs to the LptD family. As to quaternary structure, component of the lipopolysaccharide transport and assembly complex. Interacts with LptE and LptA.

The protein localises to the cell outer membrane. Together with LptE, is involved in the assembly of lipopolysaccharide (LPS) at the surface of the outer membrane. This chain is LPS-assembly protein LptD, found in Acinetobacter baylyi (strain ATCC 33305 / BD413 / ADP1).